Reading from the N-terminus, the 479-residue chain is Glycogen synthase (479 aa).

Position 15 (Lys15) interacts with ADP-alpha-D-glucose.

The protein belongs to the glycosyltransferase 1 family. Bacterial/plant glycogen synthase subfamily.

The enzyme catalyses [(1-&gt;4)-alpha-D-glucosyl](n) + ADP-alpha-D-glucose = [(1-&gt;4)-alpha-D-glucosyl](n+1) + ADP + H(+). It participates in glycan biosynthesis; glycogen biosynthesis. Functionally, synthesizes alpha-1,4-glucan chains using ADP-glucose. The polypeptide is Glycogen synthase (Roseobacter denitrificans (strain ATCC 33942 / OCh 114) (Erythrobacter sp. (strain OCh 114))).